The sequence spans 436 residues: Methylenetetrahydrofolate--tRNA-(uracil-5-)-methyltransferase TrmFO (436 aa).

An FAD-binding site is contributed by 10–15; it reads GAGLAG.

The protein belongs to the MnmG family. TrmFO subfamily. FAD is required as a cofactor.

The protein localises to the cytoplasm. The catalysed reaction is uridine(54) in tRNA + (6R)-5,10-methylene-5,6,7,8-tetrahydrofolate + NADH + H(+) = 5-methyluridine(54) in tRNA + (6S)-5,6,7,8-tetrahydrofolate + NAD(+). The enzyme catalyses uridine(54) in tRNA + (6R)-5,10-methylene-5,6,7,8-tetrahydrofolate + NADPH + H(+) = 5-methyluridine(54) in tRNA + (6S)-5,6,7,8-tetrahydrofolate + NADP(+). Functionally, catalyzes the folate-dependent formation of 5-methyl-uridine at position 54 (M-5-U54) in all tRNAs. This chain is Methylenetetrahydrofolate--tRNA-(uracil-5-)-methyltransferase TrmFO, found in Exiguobacterium sp. (strain ATCC BAA-1283 / AT1b).